Here is a 272-residue protein sequence, read N- to C-terminus: Putative hydro-lyase BRADO2538 (272 aa).

This sequence belongs to the D-glutamate cyclase family.

The polypeptide is Putative hydro-lyase BRADO2538 (Bradyrhizobium sp. (strain ORS 278)).